The sequence spans 314 residues: Methionyl-tRNA formyltransferase (314 aa).

110-113 (SLLP) serves as a coordination point for (6S)-5,6,7,8-tetrahydrofolate.

It belongs to the Fmt family.

It catalyses the reaction L-methionyl-tRNA(fMet) + (6R)-10-formyltetrahydrofolate = N-formyl-L-methionyl-tRNA(fMet) + (6S)-5,6,7,8-tetrahydrofolate + H(+). Functionally, attaches a formyl group to the free amino group of methionyl-tRNA(fMet). The formyl group appears to play a dual role in the initiator identity of N-formylmethionyl-tRNA by promoting its recognition by IF2 and preventing the misappropriation of this tRNA by the elongation apparatus. The polypeptide is Methionyl-tRNA formyltransferase (Bacillus cytotoxicus (strain DSM 22905 / CIP 110041 / 391-98 / NVH 391-98)).